The primary structure comprises 85 residues: Anti-neuroexcitation peptide 2 (85 aa).

A signal peptide spans 1–21 (MKLSLLLVISASMLIDGLVNA). An LCN-type CS-alpha/beta domain is found at 22–82 (DGYIRGSNGC…TWKSESNTCG (61 aa)). Disulfide bonds link cysteine 31-cysteine 81, cysteine 35-cysteine 56, cysteine 42-cysteine 63, and cysteine 46-cysteine 65.

Belongs to the long (4 C-C) scorpion toxin superfamily. Sodium channel inhibitor family. Beta subfamily. In terms of tissue distribution, expressed by the venom gland.

It localises to the secreted. Its function is as follows. Binds to sodium channels (Nav) and inhibits them. Recombinant ANEP delays the convulsion seizure of insect models by 18% and shows anti-neuroexcitatory activity. This chain is Anti-neuroexcitation peptide 2, found in Olivierus martensii (Manchurian scorpion).